The following is a 567-amino-acid chain: Zinc finger protein 512 (567 aa).

The disordered stretch occupies residues 1 to 32 (MSSRLGAVPATSGPTTFKQQRSTRIVGAKNSR). Positions 12–23 (SGPTTFKQQRST) are enriched in polar residues. Glycyl lysine isopeptide (Lys-Gly) (interchain with G-Cter in SUMO2) cross-links involve residues Lys-18 and Lys-84. The tract at residues 86 to 148 (AATSHVEGSG…QARRIRKEPP (63 aa)) is disordered. A compositionally biased stretch (basic residues) spans 119–130 (KKHKLYGRKQRP). The segment at 197 to 220 (FTCHHCGKQLRSLAGMKYHVMANH) adopts a C2H2-type 1 zinc-finger fold. Lys-227 is covalently cross-linked (Glycyl lysine isopeptide (Lys-Gly) (interchain with G-Cter in SUMO2)). Residues 287-310 (LKCHHCGKPYRSKAGLAYHLRSEH) form a C2H2-type 2 zinc finger. Lys-333 is covalently cross-linked (Glycyl lysine isopeptide (Lys-Gly) (interchain with G-Cter in SUMO2)). The C2H2-type 3; atypical zinc finger occupies 406-430 (IQCPNQGCEAVYSSVSGLKAHLGSC). Residues 440 to 463 (YKCLLCQKEFVSESGVKYHINSVH) form a C2H2-type 4 zinc finger. Positions 486–567 (QRQQEEEKRR…PKTNHKRGRK (82 aa)) are disordered. The span at 495–508 (RQQHRSRRSLRRRQ) shows a compositional bias: basic residues. A compositionally biased stretch (basic and acidic residues) spans 523 to 532 (VGKDQRRNNE). Over residues 556-567 (KPPKTNHKRGRK) the composition is skewed to basic residues.

The protein belongs to the krueppel C2H2-type zinc-finger protein family.

Its subcellular location is the nucleus. In terms of biological role, may be involved in transcriptional regulation. This is Zinc finger protein 512 (ZNF512) from Pongo abelii (Sumatran orangutan).